The following is a 223-amino-acid chain: Uracil-DNA glycosylase (223 aa).

The active-site Proton acceptor is Asp-67.

It belongs to the uracil-DNA glycosylase (UDG) superfamily. UNG family.

Its subcellular location is the cytoplasm. The catalysed reaction is Hydrolyzes single-stranded DNA or mismatched double-stranded DNA and polynucleotides, releasing free uracil.. In terms of biological role, excises uracil residues from the DNA which can arise as a result of misincorporation of dUMP residues by DNA polymerase or due to deamination of cytosine. This chain is Uracil-DNA glycosylase, found in Borreliella burgdorferi (strain ZS7) (Borrelia burgdorferi).